The primary structure comprises 504 residues: Anaerobic nitric oxide reductase transcription regulator NorR (504 aa).

4-aspartylphosphate is present on Asp57. Positions 187–416 constitute a Sigma-54 factor interaction domain; it reads MIGLSPGMTQ…LEHAIHRAVV (230 aa). Residues 215–222 and 278–287 each bind ATP; these read GETGTGKE and ADNGTLFLDE. A DNA-binding region (H-T-H motif) is located at residues 479–498; the sequence is WAACARMLETDVANLHRLAK.

It functions in the pathway nitrogen metabolism; nitric oxide reduction. Functionally, required for the expression of anaerobic nitric oxide (NO) reductase, acts as a transcriptional activator for at least the norVW operon. Activation also requires sigma-54. The polypeptide is Anaerobic nitric oxide reductase transcription regulator NorR (Shigella dysenteriae serotype 1 (strain Sd197)).